Consider the following 320-residue polypeptide: Cytochrome f (320 aa).

Positions 1–35 (MQTRNAFSWIKKEITRSISVLLMIYIITRAPISNA) are cleaved as a signal peptide. The heme site is built by Tyr-36, Cys-56, Cys-59, and His-60. Residues 286-305 (VQGLLLFLASIILAQIFLVL) traverse the membrane as a helical segment.

Belongs to the cytochrome f family. The 4 large subunits of the cytochrome b6-f complex are cytochrome b6, subunit IV (17 kDa polypeptide, petD), cytochrome f and the Rieske protein, while the 4 small subunits are PetG, PetL, PetM and PetN. The complex functions as a dimer. Heme serves as cofactor.

Its subcellular location is the plastid. It is found in the chloroplast thylakoid membrane. Its function is as follows. Component of the cytochrome b6-f complex, which mediates electron transfer between photosystem II (PSII) and photosystem I (PSI), cyclic electron flow around PSI, and state transitions. This Vicia faba (Broad bean) protein is Cytochrome f (petA).